We begin with the raw amino-acid sequence, 397 residues long: Tryptophan synthase beta chain 1 (397 aa).

At Lys94 the chain carries N6-(pyridoxal phosphate)lysine.

Belongs to the TrpB family. In terms of assembly, tetramer of two alpha and two beta chains. Pyridoxal 5'-phosphate is required as a cofactor.

The catalysed reaction is (1S,2R)-1-C-(indol-3-yl)glycerol 3-phosphate + L-serine = D-glyceraldehyde 3-phosphate + L-tryptophan + H2O. Its pathway is amino-acid biosynthesis; L-tryptophan biosynthesis; L-tryptophan from chorismate: step 5/5. Its function is as follows. The beta subunit is responsible for the synthesis of L-tryptophan from indole and L-serine. The chain is Tryptophan synthase beta chain 1 (trpB1) from Archaeoglobus fulgidus (strain ATCC 49558 / DSM 4304 / JCM 9628 / NBRC 100126 / VC-16).